A 120-amino-acid chain; its full sequence is Cytochrome c2 iso-1 (120 aa).

Position 1 is a pyrrolidone carboxylic acid (Gln-1). Positions 15, 18, 19, and 98 each coordinate heme c.

Belongs to the cytochrome c family. Binds 1 heme c group covalently per subunit.

Functionally, cytochrome c2 is found mainly in purple, non-sulfur, photosynthetic bacteria where it functions as the electron donor to the oxidized bacteriochlorophyll in the photophosphorylation pathway. However, it may also have a role in the respiratory chain and is found in some non-photosynthetic bacteria. This chain is Cytochrome c2 iso-1, found in Rhodospirillum centenum (Rhodocista centenaria).